Here is a 364-residue protein sequence, read N- to C-terminus: 3'(2'),5'-bisphosphate nucleotidase 1 (364 aa).

D54 functions as the Proton acceptor in the catalytic mechanism. The Mg(2+) site is built by E77, D141, I143, and D144. T146 (proton acceptor) is an active-site residue. Adenosine 3',5'-bisphosphate is bound by residues T146, H243, S272, K275, R289, and D302. The AMP site is built by H243, S272, K275, R289, and D302. D302 lines the Mg(2+) pocket.

The protein belongs to the inositol monophosphatase superfamily. Mg(2+) serves as cofactor.

It catalyses the reaction 3'-phosphoadenylyl sulfate + H2O = adenosine 5'-phosphosulfate + phosphate. The catalysed reaction is adenosine 3',5'-bisphosphate + H2O = AMP + phosphate. It carries out the reaction adenosine 2',5'-bisphosphate + H2O = AMP + phosphate. In terms of biological role, phosphatase that converts adenosine 3'-phosphate 5'-phosphosulfate (PAPS) to adenosine 5'-phosphosulfate (APS) and 3'(2')-phosphoadenosine 5'-phosphate (PAP) to AMP. Regulates the flux of sulfur in the sulfur-activation pathway by converting PAPS to APS. Involved in salt tolerance. This is 3'(2'),5'-bisphosphate nucleotidase 1 (HAL21) from Candida albicans (strain WO-1) (Yeast).